We begin with the raw amino-acid sequence, 194 residues long: uncharacterized protein (194 aa).

This is an uncharacterized protein from Gallus gallus (Chicken).